A 417-amino-acid polypeptide reads, in one-letter code: Serine hydroxymethyltransferase (417 aa).

(6S)-5,6,7,8-tetrahydrofolate is bound by residues leucine 121 and 125–127; that span reads GHL. Lysine 229 carries the N6-(pyridoxal phosphate)lysine modification. 355–357 provides a ligand contact to (6S)-5,6,7,8-tetrahydrofolate; the sequence is SPF.

This sequence belongs to the SHMT family. Homodimer. Pyridoxal 5'-phosphate is required as a cofactor.

The protein resides in the cytoplasm. It carries out the reaction (6R)-5,10-methylene-5,6,7,8-tetrahydrofolate + glycine + H2O = (6S)-5,6,7,8-tetrahydrofolate + L-serine. The protein operates within one-carbon metabolism; tetrahydrofolate interconversion. It functions in the pathway amino-acid biosynthesis; glycine biosynthesis; glycine from L-serine: step 1/1. In terms of biological role, catalyzes the reversible interconversion of serine and glycine with tetrahydrofolate (THF) serving as the one-carbon carrier. This reaction serves as the major source of one-carbon groups required for the biosynthesis of purines, thymidylate, methionine, and other important biomolecules. Also exhibits THF-independent aldolase activity toward beta-hydroxyamino acids, producing glycine and aldehydes, via a retro-aldol mechanism. This chain is Serine hydroxymethyltransferase, found in Shewanella oneidensis (strain ATCC 700550 / JCM 31522 / CIP 106686 / LMG 19005 / NCIMB 14063 / MR-1).